The following is a 180-amino-acid chain: MNLNLIKAGNNIPSDIYVIIEISSNSSPIKYEVDKQSGVLFVDRFIPTPMFYPCNYGYINETLSLDGDPLDVLVPSPYPIQSNVVINCKPVGILKMHDESGNDAKIIAVPNDKVSKEYENINDISDISELLKKQISHFFQYYKTLEKEKWVEIIGWGDHHEAKLEIKNSYDRAKKNTSLK.

Lysine 30, arginine 44, and tyrosine 56 together coordinate substrate. Mg(2+) contacts are provided by aspartate 66, aspartate 71, and aspartate 103. Residue tyrosine 142 participates in substrate binding.

It belongs to the PPase family. As to quaternary structure, homohexamer. Requires Mg(2+) as cofactor.

The protein localises to the cytoplasm. The catalysed reaction is diphosphate + H2O = 2 phosphate + H(+). In terms of biological role, catalyzes the hydrolysis of inorganic pyrophosphate (PPi) forming two phosphate ions. This Buchnera aphidicola subsp. Schizaphis graminum (strain Sg) protein is Inorganic pyrophosphatase.